Consider the following 329-residue polypeptide: GTPase Obg (329 aa).

The region spanning 1 to 159 (MQFIDQARIT…WPLQLELKLL (159 aa)) is the Obg domain. An OBG-type G domain is found at 160–328 (AEVGIIGLPN…LLDQVWQLLG (169 aa)). ATP is bound by residues 166–173 (GLPNAGKS), 191–195 (FTTLV), 213–216 (DIPG), 280–283 (NKLE), and 309–311 (SAV). Mg(2+)-binding residues include Ser173 and Thr193.

The protein belongs to the TRAFAC class OBG-HflX-like GTPase superfamily. OBG GTPase family. In terms of assembly, monomer. Requires Mg(2+) as cofactor.

It localises to the cytoplasm. Functionally, an essential GTPase which binds GTP, GDP and possibly (p)ppGpp with moderate affinity, with high nucleotide exchange rates and a fairly low GTP hydrolysis rate. Plays a role in control of the cell cycle, stress response, ribosome biogenesis and in those bacteria that undergo differentiation, in morphogenesis control. The sequence is that of GTPase Obg from Synechococcus sp. (strain WH7803).